A 331-amino-acid polypeptide reads, in one-letter code: Ferredoxin--NADP reductase 2 (331 aa).

Glu-37, Gln-45, Tyr-50, Val-90, Phe-124, Asp-286, and Thr-327 together coordinate FAD.

It belongs to the ferredoxin--NADP reductase type 2 family. As to quaternary structure, homodimer. It depends on FAD as a cofactor.

The enzyme catalyses 2 reduced [2Fe-2S]-[ferredoxin] + NADP(+) + H(+) = 2 oxidized [2Fe-2S]-[ferredoxin] + NADPH. This is Ferredoxin--NADP reductase 2 from Listeria monocytogenes serovar 1/2a (strain ATCC BAA-679 / EGD-e).